A 138-amino-acid chain; its full sequence is Cofilin (138 aa).

One can recognise an ADF-H domain in the interval 2-136 (SSGVQPTQEC…TKDALFEKAT (135 aa)).

Belongs to the actin-binding proteins ADF family.

Its subcellular location is the cytoplasm. The protein resides in the cytoskeleton. It is found in the nucleus matrix. In terms of biological role, controls reversibly actin polymerization and depolymerization in a pH-sensitive manner. It has the ability to bind G- and F-actin in a 1:1 ratio of cofilin to actin. Binding to F-actin is regulated by tropomyosin. It is the major component of intranuclear and cytoplasmic actin rods. Required for accumulation of actin at the cell division site via depolymerizing actin at the cell ends. In association with myosin II has a role in the assembly of the contractile ring via severing actin filaments. Involved in the maintenance of the contractile ring once formed. In association with profilin and capping protein, has a role in the mitotic reorganization of the actin cytoskeleton. This Cryptococcus neoformans var. neoformans serotype D (strain B-3501A) (Filobasidiella neoformans) protein is Cofilin (COF1).